A 449-amino-acid polypeptide reads, in one-letter code: Na(+)-translocating NADH-quinone reductase subunit A (449 aa).

It belongs to the NqrA family. In terms of assembly, composed of six subunits; NqrA, NqrB, NqrC, NqrD, NqrE and NqrF.

The enzyme catalyses a ubiquinone + n Na(+)(in) + NADH + H(+) = a ubiquinol + n Na(+)(out) + NAD(+). NQR complex catalyzes the reduction of ubiquinone-1 to ubiquinol by two successive reactions, coupled with the transport of Na(+) ions from the cytoplasm to the periplasm. NqrA to NqrE are probably involved in the second step, the conversion of ubisemiquinone to ubiquinol. This is Na(+)-translocating NADH-quinone reductase subunit A from Actinobacillus pleuropneumoniae serotype 3 (strain JL03).